A 62-amino-acid polypeptide reads, in one-letter code: Large ribosomal subunit protein bL28 (62 aa).

Belongs to the bacterial ribosomal protein bL28 family.

The sequence is that of Large ribosomal subunit protein bL28 from Frankia casuarinae (strain DSM 45818 / CECT 9043 / HFP020203 / CcI3).